The chain runs to 123 residues: Cysteine-rich DPF motif domain-containing protein 1 (123 aa).

Residues 102 to 123 (RQDLEKRKAPSKRTPSQPGSRT) form a disordered region. Residues 114–123 (RTPSQPGSRT) are compositionally biased toward polar residues.

The protein belongs to the CDPF1 family.

This chain is Cysteine-rich DPF motif domain-containing protein 1 (CDPF1), found in Homo sapiens (Human).